The sequence spans 513 residues: NAD(P)H-quinone oxidoreductase subunit 2 (513 aa).

A run of 14 helical transmembrane segments spans residues 15–35 (VIWP…GDLI), 43–63 (WLPY…YFTW), 80–100 (LSIV…LMSI), 110–130 (LAEF…LSGA), 133–153 (LVMI…MTGY), 168–188 (LLIG…LYGL), 211–231 (LALA…ISAV), 245–265 (PTPV…ALAI), 281–301 (FIFI…ALAQ), 307–327 (MLAY…TAGT), 335–355 (IFYL…VILF), 379–399 (LCLS…GFFG), 401–421 (IYLF…VGLV), and 467–487 (VGIV…NPLF).

It belongs to the complex I subunit 2 family. In terms of assembly, NDH-1 can be composed of about 15 different subunits; different subcomplexes with different compositions have been identified which probably have different functions.

It is found in the cellular thylakoid membrane. It catalyses the reaction a plastoquinone + NADH + (n+1) H(+)(in) = a plastoquinol + NAD(+) + n H(+)(out). The enzyme catalyses a plastoquinone + NADPH + (n+1) H(+)(in) = a plastoquinol + NADP(+) + n H(+)(out). In terms of biological role, NDH-1 shuttles electrons from an unknown electron donor, via FMN and iron-sulfur (Fe-S) centers, to quinones in the respiratory and/or the photosynthetic chain. The immediate electron acceptor for the enzyme in this species is believed to be plastoquinone. Couples the redox reaction to proton translocation, and thus conserves the redox energy in a proton gradient. Cyanobacterial NDH-1 also plays a role in inorganic carbon-concentration. The polypeptide is NAD(P)H-quinone oxidoreductase subunit 2 (Microcystis aeruginosa (strain NIES-843 / IAM M-2473)).